The following is a 413-amino-acid chain: Terephthalate 1,2-dioxygenase, terminal oxygenase component subunit alpha 2 (413 aa).

The 104-residue stretch at 41 to 144 (NYLCLESEIP…CKEEHGPRKL (104 aa)) folds into the Rieske domain. The [2Fe-2S] cluster site is built by Cys82, His84, Cys102, and His105.

It belongs to the bacterial ring-hydroxylating dioxygenase alpha subunit family. In terms of assembly, heterotetramer composed of 2 alpha (TphA2I and TphA2II) and 2 beta (TphA3I and TphA3II) subunits. Part of a multicomponent enzyme system composed of a reductase (TphA1I or TphA1II) and a two-subunit oxygenase component (TphA2I or TphA2II and TphA3I or TphA3II). Requires Fe cation as cofactor. It depends on [2Fe-2S] cluster as a cofactor.

It catalyses the reaction terephthalate + NADH + O2 + H(+) = (3S,4R)-3,4-dihydroxycyclohexa-1,5-diene-1,4-dicarboxylate + NAD(+). Its activity is regulated as follows. Inhibited by EDTA. Its function is as follows. Component of the terephthalate 1,2-dioxygenase multicomponent enzyme system which catalyzes the dioxygenation of terephthalate (TER/TPA) to 1,2-dihydroxy-3,5-cyclohexadiene-1,4-dicarboxylic acid (DCD). It can also use 2,5-dicarboxypyridine (PDC) and 1,4-napthalenedicarboxylic acid (NDC) as substrates, and preferentially uses NADPH which is the physiological electron donor. This chain is Terephthalate 1,2-dioxygenase, terminal oxygenase component subunit alpha 2 (tphA2II), found in Comamonas sp.